A 101-amino-acid polypeptide reads, in one-letter code: Small ribosomal subunit protein uS14 (101 aa).

The tract at residues 1–26 (MAKVSSIKKNESRKKKSQSLHNKRSA) is disordered. Residues 11 to 26 (ESRKKKSQSLHNKRSA) are compositionally biased toward basic residues.

Belongs to the universal ribosomal protein uS14 family. Part of the 30S ribosomal subunit. Contacts proteins S3 and S10.

Binds 16S rRNA, required for the assembly of 30S particles and may also be responsible for determining the conformation of the 16S rRNA at the A site. This is Small ribosomal subunit protein uS14 from Rickettsia felis (strain ATCC VR-1525 / URRWXCal2) (Rickettsia azadi).